The chain runs to 692 residues: Elongation factor G (692 aa).

Residues 8-282 (EKVRNIGIAA…AVVDYLPAPT (275 aa)) form the tr-type G domain. Residues 17–24 (AHIDAGKT), 81–85 (DTPGH), and 135–138 (NKMD) each bind GTP.

This sequence belongs to the TRAFAC class translation factor GTPase superfamily. Classic translation factor GTPase family. EF-G/EF-2 subfamily.

It is found in the cytoplasm. Its function is as follows. Catalyzes the GTP-dependent ribosomal translocation step during translation elongation. During this step, the ribosome changes from the pre-translocational (PRE) to the post-translocational (POST) state as the newly formed A-site-bound peptidyl-tRNA and P-site-bound deacylated tRNA move to the P and E sites, respectively. Catalyzes the coordinated movement of the two tRNA molecules, the mRNA and conformational changes in the ribosome. This chain is Elongation factor G, found in Trichormus variabilis (strain ATCC 29413 / PCC 7937) (Anabaena variabilis).